Consider the following 129-residue polypeptide: Small ribosomal subunit protein uS11c (129 aa).

The protein belongs to the universal ribosomal protein uS11 family. In terms of assembly, part of the 30S ribosomal subunit.

It localises to the plastid. The protein localises to the chloroplast. In Cyanidium caldarium (Red alga), this protein is Small ribosomal subunit protein uS11c.